A 493-amino-acid polypeptide reads, in one-letter code: Guanosine-5'-triphosphate,3'-diphosphate pyrophosphatase (493 aa).

This sequence belongs to the GppA/Ppx family. GppA subfamily.

The enzyme catalyses guanosine 3'-diphosphate 5'-triphosphate + H2O = guanosine 3',5'-bis(diphosphate) + phosphate + H(+). It functions in the pathway purine metabolism; ppGpp biosynthesis; ppGpp from GTP: step 2/2. Its function is as follows. Catalyzes the conversion of pppGpp to ppGpp. Guanosine pentaphosphate (pppGpp) is a cytoplasmic signaling molecule which together with ppGpp controls the 'stringent response', an adaptive process that allows bacteria to respond to amino acid starvation, resulting in the coordinated regulation of numerous cellular activities. This is Guanosine-5'-triphosphate,3'-diphosphate pyrophosphatase from Salmonella paratyphi A (strain ATCC 9150 / SARB42).